Consider the following 269-residue polypeptide: 4-hydroxy-tetrahydrodipicolinate reductase (269 aa).

NAD(+) is bound by residues 8–13 (GAAGRM) and Glu34. Arg35 is an NADP(+) binding site. Residues 98–100 (GTT) and 122–125 (APNY) contribute to the NAD(+) site. His155 functions as the Proton donor/acceptor in the catalytic mechanism. Residue His156 coordinates (S)-2,3,4,5-tetrahydrodipicolinate. Lys159 functions as the Proton donor in the catalytic mechanism. A (S)-2,3,4,5-tetrahydrodipicolinate-binding site is contributed by 165 to 166 (GT).

Belongs to the DapB family.

The protein resides in the cytoplasm. It catalyses the reaction (S)-2,3,4,5-tetrahydrodipicolinate + NAD(+) + H2O = (2S,4S)-4-hydroxy-2,3,4,5-tetrahydrodipicolinate + NADH + H(+). It carries out the reaction (S)-2,3,4,5-tetrahydrodipicolinate + NADP(+) + H2O = (2S,4S)-4-hydroxy-2,3,4,5-tetrahydrodipicolinate + NADPH + H(+). Its pathway is amino-acid biosynthesis; L-lysine biosynthesis via DAP pathway; (S)-tetrahydrodipicolinate from L-aspartate: step 4/4. Functionally, catalyzes the conversion of 4-hydroxy-tetrahydrodipicolinate (HTPA) to tetrahydrodipicolinate. The protein is 4-hydroxy-tetrahydrodipicolinate reductase of Aliivibrio fischeri (strain ATCC 700601 / ES114) (Vibrio fischeri).